The chain runs to 134 residues: Large ribosomal subunit protein bL12 (134 aa).

The protein belongs to the bacterial ribosomal protein bL12 family. In terms of assembly, homodimer. Part of the ribosomal stalk of the 50S ribosomal subunit. Forms a multimeric L10(L12)X complex, where L10 forms an elongated spine to which 2 to 4 L12 dimers bind in a sequential fashion. Binds GTP-bound translation factors.

In terms of biological role, forms part of the ribosomal stalk which helps the ribosome interact with GTP-bound translation factors. Is thus essential for accurate translation. The protein is Large ribosomal subunit protein bL12 of Anaplasma phagocytophilum (strain HZ).